A 297-amino-acid chain; its full sequence is Transcriptional regulator protein Pur-beta (297 aa).

Disordered regions lie at residues 1–26 and 275–297; these read MADG…EQET and QERH…VDDD. Ala-2 carries the N-acetylalanine modification. The tract at residues 23-246 is DNA-binding; sequence EQETQELASK…LRVSEVKPSY (224 aa). The segment covering 275-288 has biased composition (basic and acidic residues); it reads QERHRDKMYERREE.

The protein belongs to the PUR DNA-binding protein family.

It localises to the nucleus. Its function is as follows. Transcriptional regulator which can act as an activator or a repressor. The sequence is that of Transcriptional regulator protein Pur-beta (purb) from Danio rerio (Zebrafish).